A 473-amino-acid chain; its full sequence is Photosystem II CP43 reaction center protein (473 aa).

A propeptide spanning residues 1–14 (MKTLYSLRRSYPVE) is cleaved from the precursor. Thr-15 is modified (N-acetylthreonine). Thr-15 is subject to Phosphothreonine. 5 helical membrane passes run 69-93 (LFEVAHFVPEKPMYEQGLILLPHLA), 134-155 (LIGPETLEESFPFFGYVWKDKN), 178-200 (KALYFGGLYDTWAPGGGDVRKIT), 255-275 (KPFAWARRAFVWSGEAYLSYS), and 291-312 (WFNNTAYPSEFYGPTGPEASQA). Glu-367 is a [CaMn4O5] cluster binding site. The chain crosses the membrane as a helical span at residues 447–471 (RARAAAAGFEKGIDRDTEPVLFMNP).

This sequence belongs to the PsbB/PsbC family. PsbC subfamily. PSII is composed of 1 copy each of membrane proteins PsbA, PsbB, PsbC, PsbD, PsbE, PsbF, PsbH, PsbI, PsbJ, PsbK, PsbL, PsbM, PsbT, PsbX, PsbY, PsbZ, Psb30/Ycf12, at least 3 peripheral proteins of the oxygen-evolving complex and a large number of cofactors. It forms dimeric complexes. Binds multiple chlorophylls and provides some of the ligands for the Ca-4Mn-5O cluster of the oxygen-evolving complex. It may also provide a ligand for a Cl- that is required for oxygen evolution. PSII binds additional chlorophylls, carotenoids and specific lipids. is required as a cofactor.

Its subcellular location is the plastid. It is found in the chloroplast thylakoid membrane. Functionally, one of the components of the core complex of photosystem II (PSII). It binds chlorophyll and helps catalyze the primary light-induced photochemical processes of PSII. PSII is a light-driven water:plastoquinone oxidoreductase, using light energy to abstract electrons from H(2)O, generating O(2) and a proton gradient subsequently used for ATP formation. This is Photosystem II CP43 reaction center protein from Zygnema circumcarinatum (Green alga).